We begin with the raw amino-acid sequence, 599 residues long: MMIDQIAQESARPAWQTHDHLDDPVMGELRNHFGPDAFTVQPTRTGIPVVWVKREQLLEVMTFLKKLPKPYVMLFDLHGMDERQRTHRQGLPAADFSVFYHLLSIERNRDIMLKVALSEKELNLPTATPLFPNANWYERETWEMFGVVFNGHPNLRRIMLPPTWEGHPLRKDYPARATEFDPFELTRQKEDLEMEALTFKPEEWGMKRGTENEDFMFLNLGPNHPSSHGAFRIILQLDGEEIVDCVPDIGYHHRGAEKMGERQSWHSYIPYTDRIEYLGGCVNEMPYVLAVEKLAGIEVPDRVKTIRVMLSELFRINSHLLYISTFIQDVGGMTPVFFAFTDRQKVYDLVEAITGFRMHPAWFRIGGVAHDLPRGWDRLLRDFLNWMPKRLDSYVKAALKNSILKGRAIGVAAYNSKQALEWGTTGAGLRATGIAFDVRKWRPYSGYENFDFDVPIGNNGDCYDRVMLKVEEVRQSLRILKQCLDNMPEGPFKADHPLTTPPPKERTLQHIETMINHFLQVSWGPVMPANESFQMIEATKGINSYYLTSDGSTVSYRTRVRTPSYPHLQQIPSVIRGSLVSDLIVYLGSIDFVMSDVDR.

Positions 1–190 (MMIDQIAQES…DPFELTRQKE (190 aa)) are NADH dehydrogenase I subunit C. The NADH dehydrogenase I subunit D stretch occupies residues 214 to 599 (DFMFLNLGPN…IDFVMSDVDR (386 aa)).

The protein in the N-terminal section; belongs to the complex I 30 kDa subunit family. This sequence in the C-terminal section; belongs to the complex I 49 kDa subunit family. As to quaternary structure, NDH-1 is composed of 13 different subunits. Subunits NuoB, CD, E, F, and G constitute the peripheral sector of the complex.

It localises to the cell inner membrane. It catalyses the reaction a quinone + NADH + 5 H(+)(in) = a quinol + NAD(+) + 4 H(+)(out). NDH-1 shuttles electrons from NADH, via FMN and iron-sulfur (Fe-S) centers, to quinones in the respiratory chain. The immediate electron acceptor for the enzyme in this species is believed to be ubiquinone. Couples the redox reaction to proton translocation (for every two electrons transferred, four hydrogen ions are translocated across the cytoplasmic membrane), and thus conserves the redox energy in a proton gradient. In Photorhabdus laumondii subsp. laumondii (strain DSM 15139 / CIP 105565 / TT01) (Photorhabdus luminescens subsp. laumondii), this protein is NADH-quinone oxidoreductase subunit C/D.